Consider the following 55-residue polypeptide: uncharacterized protein (55 aa).

Residues 24-46 (LFIIFFTYSYYYCGFLQSFNYII) traverse the membrane as a helical segment.

The protein resides in the membrane. This is an uncharacterized protein from Dictyostelium discoideum (Social amoeba).